Reading from the N-terminus, the 367-residue chain is MTSRNYLLLTPGPLTTSRTVKEAMLFDSCTWDDDYNIGVVEQIRQQLTALATASEGYTSVLLQGSGSYAVEAVLGSALGPQDKVLIVSNGAYGARMVEMAGLMGIAHHAYDCGEVARPDVQAIDAILNVDPTISHIAMVHSETTTGMLNPIDEVGALAHRYGKTYIVDAMSSFGGIPMDIAALHIDYLISSANKCIQGVPGFAFVIAREQKLAACKGRSRSLSLDLYAQWRCMEDNHGKWRFTSPTHTVLAFAQALKELAKEGGVAARHQRYQQNQRSLVAGMRALGFNTLLDDELHSPIITAFYSPEDPQYRFSEFYRRLKEQGFVIYPGKVSQSDCFRIGNIGEVYAADITALLTAIRTAMYWTK.

Residue Lys-194 is modified to N6-(pyridoxal phosphate)lysine.

The protein belongs to the class-V pyridoxal-phosphate-dependent aminotransferase family. PhnW subfamily. As to quaternary structure, homodimer. Pyridoxal 5'-phosphate is required as a cofactor.

The catalysed reaction is (2-aminoethyl)phosphonate + pyruvate = phosphonoacetaldehyde + L-alanine. In terms of biological role, involved in phosphonate degradation. The sequence is that of 2-aminoethylphosphonate--pyruvate transaminase from Salmonella paratyphi A (strain ATCC 9150 / SARB42).